A 427-amino-acid chain; its full sequence is 3-phosphoshikimate 1-carboxyvinyltransferase (427 aa).

3-phosphoshikimate-binding residues include Lys-20, Ser-21, and Arg-25. Lys-20 serves as a coordination point for phosphoenolpyruvate. The phosphoenolpyruvate site is built by Gly-90 and Arg-118. The 3-phosphoshikimate site is built by Ser-163, Ser-164, Gln-165, Ser-191, Asp-309, and Lys-336. Gln-165 is a binding site for phosphoenolpyruvate. Catalysis depends on Asp-309, which acts as the Proton acceptor. Arg-340 and Arg-381 together coordinate phosphoenolpyruvate.

Belongs to the EPSP synthase family. As to quaternary structure, monomer.

It localises to the cytoplasm. The catalysed reaction is 3-phosphoshikimate + phosphoenolpyruvate = 5-O-(1-carboxyvinyl)-3-phosphoshikimate + phosphate. Its pathway is metabolic intermediate biosynthesis; chorismate biosynthesis. Its function is as follows. Catalyzes the transfer of the enolpyruvyl moiety of phosphoenolpyruvate (PEP) to the 5-hydroxyl of shikimate-3-phosphate (S3P) to produce enolpyruvyl shikimate-3-phosphate and inorganic phosphate. The chain is 3-phosphoshikimate 1-carboxyvinyltransferase from Methanococcoides burtonii (strain DSM 6242 / NBRC 107633 / OCM 468 / ACE-M).